A 162-amino-acid chain; its full sequence is Phospholipase A and acyltransferase 3 (162 aa).

The Cytoplasmic segment spans residues methionine 1–alanine 133. An LRAT domain is found at leucine 13–glutamine 129. Active-site residues include histidine 23 and histidine 35. Cysteine 113 (acyl-thioester intermediate) is an active-site residue. A helical transmembrane segment spans residues valine 134–leucine 154. The Lumenal portion of the chain corresponds to serine 155–glutamine 162.

This sequence belongs to the H-rev107 family. Interacts with PPP2R1A; this interaction might decrease PP2A activity. Ubiquitously expressed in normal tissues but down-regulated in primary carcinomas or in many cell lines derived from tumors. Highly expressed in white adipose tissue and in adipocytes. Expressed at lower levels in brown adipose tissue.

It is found in the cell membrane. The protein localises to the cytoplasm. Its subcellular location is the cytosol. The protein resides in the perinuclear region. It localises to the peroxisome membrane. It is found in the mitochondrion membrane. The protein localises to the nucleus envelope. Its subcellular location is the lysosome membrane. The protein resides in the endoplasmic reticulum membrane. It carries out the reaction a 1,2-diacyl-sn-glycero-3-phosphocholine + H2O = a 1-acyl-sn-glycero-3-phosphocholine + a fatty acid + H(+). The enzyme catalyses a 1,2-diacyl-sn-glycero-3-phosphocholine + H2O = a 2-acyl-sn-glycero-3-phosphocholine + a fatty acid + H(+). It catalyses the reaction 1,2-dihexadecanoyl-sn-glycero-3-phosphocholine + H2O = 1-hexadecanoyl-sn-glycero-3-phosphocholine + hexadecanoate + H(+). The catalysed reaction is 1,2-dihexadecanoyl-sn-glycero-3-phosphocholine + H2O = 2-hexadecanoyl-sn-glycero-3-phosphocholine + hexadecanoate + H(+). It carries out the reaction 1-hexadecanoyl-2-(9Z-octadecenoyl)-sn-glycero-3-phosphocholine + H2O = 2-(9Z-octadecenoyl)-sn-glycero-3-phosphocholine + hexadecanoate + H(+). The enzyme catalyses 1-hexadecanoyl-2-(9Z-octadecenoyl)-sn-glycero-3-phosphocholine + H2O = 1-hexadecanoyl-sn-glycero-3-phosphocholine + (9Z)-octadecenoate + H(+). It catalyses the reaction 1-hexadecanoyl-2-(5Z,8Z,11Z,14Z-eicosatetraenoyl)-sn-glycero-3-phosphocholine + H2O = 1-hexadecanoyl-sn-glycero-3-phosphocholine + (5Z,8Z,11Z,14Z)-eicosatetraenoate + H(+). The catalysed reaction is 1-hexadecanoyl-2-(5Z,8Z,11Z,14Z-eicosatetraenoyl)-sn-glycero-3-phosphocholine + H2O = 2-(5Z,8Z,11Z,14Z)-eicosatetraenoyl-sn-glycero-3-phosphocholine + hexadecanoate + H(+). It carries out the reaction 1-hexadecanoyl-2-(9Z,12Z-octadecadienoyl)-sn-glycero-3-phosphoethanolamine + H2O = 1-hexadecanoyl-sn-glycero-3-phosphoethanolamine + (9Z,12Z)-octadecadienoate + H(+). The enzyme catalyses 1-hexadecanoyl-2-(9Z,12Z-octadecadienoyl)-sn-glycero-3-phosphoethanolamine + H2O = 2-(9Z,12Z)-octadecadienoyl-sn-glycero-3-phosphoethanolamine + hexadecanoate + H(+). It catalyses the reaction 1-hexadecanoyl-2-(5Z,8Z,11Z,14Z-eicosatetraenoyl)-sn-glycero-3-phosphoethanolamine + H2O = 1-hexadecanoyl-sn-glycero-3-phosphoethanolamine + (5Z,8Z,11Z,14Z)-eicosatetraenoate + H(+). The catalysed reaction is 1-hexadecanoyl-2-(5Z,8Z,11Z,14Z-eicosatetraenoyl)-sn-glycero-3-phosphoethanolamine + H2O = 2-(5Z,8Z,11Z,14Z)-eicosatetraenoyl-sn-glycero-3-phosphoethanolamine + hexadecanoate + H(+). It carries out the reaction 1-hexanoyl-2-acyl-sn-glycero-3-phosphocholine + H2O = hexanoate + a 2-acyl-sn-glycero-3-phosphocholine + H(+). The enzyme catalyses 1-hexanoyl-2-acyl-sn-glycero-3-phosphocholine + H2O = 1-hexanoyl-sn-glycero-3-phosphocholine + a fatty acid + H(+). It catalyses the reaction 1,2-diheptadecanoyl-sn-glycero-3-phosphoethanolamine + 1-(9Z-octadecenoyl)-2-hexadecanoyl-sn-glycero-3-phosphocholine = 1,2-diheptadecanoyl-sn-glycero-3-phospho-N-hexadecanoyl-ethanolamine + 1-(9Z-octadecenoyl)-sn-glycero-3-phosphocholine + H(+). The catalysed reaction is 1,2-diheptadecanoyl-sn-glycero-3-phosphoethanolamine + 1-(9Z-octadecenoyl)-2-hexadecanoyl-sn-glycero-3-phosphocholine = 1,2-diheptadecanoyl-sn-glycero-3-phospho-N-(9Z-octadecenoyl)-ethanolamine + 2-hexadecanoyl-sn-glycero-3-phosphocholine + H(+). It carries out the reaction 1,2-dihexanoyl-sn-glycero-3-phosphoethanolamine + 2-heptanoyl-sn-glycero-3-phosphocholine = hexanoyl-sn-glycero-3-phosphoethanolamine + 1-hexanoyl-2-heptanoyl-sn-glycero-3-phosphocholine. The enzyme catalyses 1-hexadecanoyl-2-octadecanoyl-sn-glycero-3-phosphocholine + H2O = octadecanoate + 1-hexadecanoyl-sn-glycero-3-phosphocholine + H(+). It catalyses the reaction 1-hexadecanoyl-2-octadecanoyl-sn-glycero-3-phosphocholine + H2O = 2-octadecanoyl-sn-glycero-3-phosphocholine + hexadecanoate + H(+). The catalysed reaction is 1-octadecanoyl-2-hexadecanoyl-sn-glycero-3-phosphocholine + H2O = 1-octadecanoyl-sn-glycero-3-phosphocholine + hexadecanoate + H(+). It carries out the reaction 1-octadecanoyl-2-hexadecanoyl-sn-glycero-3-phosphocholine + H2O = 2-hexadecanoyl-sn-glycero-3-phosphocholine + octadecanoate + H(+). The enzyme catalyses 1-hexadecanoyl-2-(9Z,12Z-octadecadienoyl)-sn-glycero-3-phosphocholine + H2O = (9Z,12Z)-octadecadienoate + 1-hexadecanoyl-sn-glycero-3-phosphocholine + H(+). It catalyses the reaction 1-hexadecanoyl-2-(9Z,12Z-octadecadienoyl)-sn-glycero-3-phosphocholine + H2O = 2-(9Z,12Z-octadecadienoyl)-sn-glycero-3-phosphocholine + hexadecanoate + H(+). The catalysed reaction is 1,2-di-(9Z-octadecenoyl)-sn-glycero-3-phosphocholine + H2O = 2-(9Z-octadecenoyl)-sn-glycero-3-phosphocholine + (9Z)-octadecenoate + H(+). It carries out the reaction 1,2-dihexadecanoyl-sn-glycero-3-phosphocholine + H2O = hexadecanoyl-sn-glycero-3-phosphocholine + hexadecanoate + H(+). The enzyme catalyses 1,2-di-(9Z-octadecenoyl)-sn-glycero-3-phosphocholine + H2O = 1-(9Z-octadecenoyl)-sn-glycero-3-phosphocholine + (9Z)-octadecenoate + H(+). It catalyses the reaction 1,2-di-(9Z-octadecenoyl)-sn-glycero-3-phosphoethanolamine + 1,2-dihexadecanoyl-sn-glycero-3-phosphocholine = hexadecanoyl-sn-glycero-3-phosphocholine + N-hexadecanoyl-1,2-di-(9Z-octadecenoyl)-sn-glycero-3-phosphoethanolamine + H(+). The catalysed reaction is 1,2-di-(9Z,12Z-octadecadienoyl)-sn-glycero-3-phosphocholine + H2O = 1-(9Z,12Z)-octadecadienoyl-sn-glycero-3-phosphocholine + (9Z,12Z)-octadecadienoate + H(+). Functionally, exhibits both phospholipase A1/2 and acyltransferase activities. Shows phospholipase A1 (PLA1) and A2 (PLA2), catalyzing the calcium-independent release of fatty acids from the sn-1 or sn-2 position of glycerophospholipids. For most substrates, PLA1 activity is much higher than PLA2 activity. Shows O-acyltransferase activity, catalyzing the transfer of a fatty acyl group from glycerophospholipid to the hydroxyl group of lysophospholipid. Shows N-acyltransferase activity,catalyzing the calcium-independent transfer of a fatty acyl group at the sn-1 position of phosphatidylcholine (PC) and other glycerophospholipids to the primary amine of phosphatidylethanolamine (PE), forming N-acylphosphatidylethanolamine (NAPE), which serves as precursor for N-acylethanolamines (NAEs). Exhibits high N-acyltransferase activity and low phospholipase A1/2 activity. Required for complete organelle rupture and degradation that occur during eye lens terminal differentiation, when fiber cells that compose the lens degrade all membrane-bound organelles in order to provide lens with transparency to allow the passage of light. Organelle membrane degradation is probably catalyzed by the phospholipase activity. (Microbial infection) Acts as a host factor for picornaviruses: required during early infection to promote viral genome release into the cytoplasm. The protein is Phospholipase A and acyltransferase 3 of Mus musculus (Mouse).